Consider the following 502-residue polypeptide: Actin nucleation-promoting factor WAS (502 aa).

In terms of domain architecture, WH1 spans 39–148 (LGRKCLTLAT…ALVQEKIQKR (110 aa)). The segment at 146-240 (QKRNQRQSGD…KKISKADIGA (95 aa)) is disordered. Residues 201-211 (DIQNPDITSSR) show a composition bias toward polar residues. At Ser-221 the chain carries Phosphoserine. Positions 238 to 251 (IGAPSGFKHVSHVG) constitute a CRIB domain. Tyr-291 bears the Phosphotyrosine; by FYN and HCK mark. The tract at residues 307-502 (MRRQEPLPPP…DEDEDDEWDD (196 aa)) is disordered. GRSGPLPPXP motif repeat units lie at residues 337–346 (GRSGPLPPVP) and 376–385 (GRSGPLPPPP). A compositionally biased stretch (pro residues) spans 341-419 (PLPPVPLGIA…PAPPPLPPAL (79 aa)). Residues 430–447 (GRGALLDQIRQGIQLNKT) enclose the WH2 domain. Phosphoserine; by CK2 occurs at positions 483 and 484. The span at 486 to 502 (EGEDQAGDEDEDDEWDD) shows a compositional bias: acidic residues.

As to quaternary structure, binds the Arp2/3 complex. Interacts with CDC42, RAC, NCK, HCK, FYN, SRC kinase FGR, BTK, ABL1, PSTPIP1, WIP, and to the p85 subunit of PLC-gamma. Interacts (via C-terminus) with ALDOA. Interacts with NCK1 (via SH3 domains). Interacts with FCHSD2. (Microbial infection) Interacts with E.coli effector protein EspF(U). In terms of processing, phosphorylated at Tyr-291 by FYN and HCK, inducing WAS effector activity after TCR engagement. Phosphorylation at Tyr-291 enhances WAS activity in promoting actin polymerization and filopodia formation. Expressed predominantly in the thymus. Also found, to a much lesser extent, in the spleen.

The protein resides in the cytoplasm. It is found in the cytoskeleton. Its subcellular location is the nucleus. Functionally, effector protein for Rho-type GTPases that regulates actin filament reorganization via its interaction with the Arp2/3 complex. Important for efficient actin polymerization. Possible regulator of lymphocyte and platelet function. Mediates actin filament reorganization and the formation of actin pedestals upon infection by pathogenic bacteria. In addition to its role in the cytoplasmic cytoskeleton, also promotes actin polymerization in the nucleus, thereby regulating gene transcription and repair of damaged DNA. Promotes homologous recombination (HR) repair in response to DNA damage by promoting nuclear actin polymerization, leading to drive motility of double-strand breaks (DSBs). This chain is Actin nucleation-promoting factor WAS (WAS), found in Homo sapiens (Human).